The sequence spans 345 residues: S-adenosylmethionine:tRNA ribosyltransferase-isomerase (345 aa).

The protein belongs to the QueA family. Monomer.

The protein localises to the cytoplasm. The enzyme catalyses 7-aminomethyl-7-carbaguanosine(34) in tRNA + S-adenosyl-L-methionine = epoxyqueuosine(34) in tRNA + adenine + L-methionine + 2 H(+). The protein operates within tRNA modification; tRNA-queuosine biosynthesis. Transfers and isomerizes the ribose moiety from AdoMet to the 7-aminomethyl group of 7-deazaguanine (preQ1-tRNA) to give epoxyqueuosine (oQ-tRNA). The sequence is that of S-adenosylmethionine:tRNA ribosyltransferase-isomerase from Shewanella amazonensis (strain ATCC BAA-1098 / SB2B).